The sequence spans 120 residues: NAD(P)H-quinone oxidoreductase subunit 3, chloroplastic (120 aa).

3 consecutive transmembrane segments (helical) span residues 10–30 (FWFF…TSKL), 64–84 (MFAL…PWAM), and 89–109 (LGVY…IGLV).

This sequence belongs to the complex I subunit 3 family. As to quaternary structure, NDH is composed of at least 16 different subunits, 5 of which are encoded in the nucleus.

It localises to the plastid. The protein localises to the chloroplast thylakoid membrane. It carries out the reaction a plastoquinone + NADH + (n+1) H(+)(in) = a plastoquinol + NAD(+) + n H(+)(out). The catalysed reaction is a plastoquinone + NADPH + (n+1) H(+)(in) = a plastoquinol + NADP(+) + n H(+)(out). Its function is as follows. NDH shuttles electrons from NAD(P)H:plastoquinone, via FMN and iron-sulfur (Fe-S) centers, to quinones in the photosynthetic chain and possibly in a chloroplast respiratory chain. The immediate electron acceptor for the enzyme in this species is believed to be plastoquinone. Couples the redox reaction to proton translocation, and thus conserves the redox energy in a proton gradient. The protein is NAD(P)H-quinone oxidoreductase subunit 3, chloroplastic of Chaetosphaeridium globosum (Charophycean green alga).